The sequence spans 482 residues: 2-succinylbenzoate--CoA ligase (482 aa).

Belongs to the ATP-dependent AMP-binding enzyme family. MenE subfamily.

It carries out the reaction 2-succinylbenzoate + ATP + CoA = 2-succinylbenzoyl-CoA + AMP + diphosphate. Its pathway is quinol/quinone metabolism; 1,4-dihydroxy-2-naphthoate biosynthesis; 1,4-dihydroxy-2-naphthoate from chorismate: step 5/7. The protein operates within quinol/quinone metabolism; menaquinone biosynthesis. Its function is as follows. Converts 2-succinylbenzoate (OSB) to 2-succinylbenzoyl-CoA (OSB-CoA). The protein is 2-succinylbenzoate--CoA ligase of Bacillus anthracis (strain A0248).